The primary structure comprises 304 residues: Putative AraC-like transcription regulator (304 aa).

The region spanning 202–300 is the HTH araC/xylS-type domain; the sequence is ATALTCLHRD…GMPPGDYRKH (99 aa). DNA-binding regions (H-T-H motif) lie at residues 219 to 240 and 267 to 290; these read ADLA…KATV and LASI…KRVL.

In Streptomyces lividans, this protein is Putative AraC-like transcription regulator.